A 296-amino-acid chain; its full sequence is Probable endonuclease 4 (296 aa).

Residues His-68, His-109, Glu-144, Asp-178, His-181, His-213, Asp-226, His-228, and Glu-258 each coordinate Zn(2+).

This sequence belongs to the AP endonuclease 2 family. Requires Zn(2+) as cofactor.

The catalysed reaction is Endonucleolytic cleavage to 5'-phosphooligonucleotide end-products.. Its function is as follows. Endonuclease IV plays a role in DNA repair. It cleaves phosphodiester bonds at apurinic or apyrimidinic (AP) sites, generating a 3'-hydroxyl group and a 5'-terminal sugar phosphate. In Pediococcus pentosaceus (strain ATCC 25745 / CCUG 21536 / LMG 10740 / 183-1w), this protein is Probable endonuclease 4.